A 230-amino-acid polypeptide reads, in one-letter code: Probable septum site-determining protein MinC (230 aa).

It belongs to the MinC family. Interacts with MinD and FtsZ.

In terms of biological role, cell division inhibitor that blocks the formation of polar Z ring septums. Rapidly oscillates between the poles of the cell to destabilize FtsZ filaments that have formed before they mature into polar Z rings. Prevents FtsZ polymerization. This is Probable septum site-determining protein MinC from Rhodopseudomonas palustris (strain BisA53).